The chain runs to 619 residues: Polyadenylate-binding protein 1-like (619 aa).

RRM domains are found at residues 11–89, 99–175, 191–268, and 294–370; these read ASLY…WSQR, GNIF…HFKS, TNIY…RAQK, and VNLY…LAQR. The segment at 431–458 is disordered; sequence PAPRWTSQPPRPSSAYPPGASMVRPPVV. A PABC domain is found at 533–610; sequence QEPLTASMLA…AVAVLQAHQA (78 aa).

Belongs to the polyadenylate-binding protein type-1 family. Expressed in ovary and testis. Also expressed in pancreas, liver and thymus, and at lower levels in other somatic tissues including brain and lung.

The protein resides in the cytoplasm. In terms of biological role, poly(A)-binding protein involved in oocyte maturation and early embryo development. It is required for cytosolic mRNA polyadenylation and translational activation of maternally stored mRNA in oocytes. This Homo sapiens (Human) protein is Polyadenylate-binding protein 1-like.